The chain runs to 106 residues: Thioredoxin-like protein YdbP (106 aa).

A Thioredoxin domain is found at 1-106; that stretch reads MKKITTNEQF…VTEFLSEHIS (106 aa). Cysteines 29 and 32 form a disulfide.

Belongs to the thioredoxin family.

In terms of biological role, participates in various redox reactions through the reversible oxidation of its active center dithiol to a disulfide and catalyzes dithiol-disulfide exchange reactions. This is Thioredoxin-like protein YdbP (ydbP) from Bacillus subtilis (strain 168).